The chain runs to 203 residues: Outer-membrane lipoprotein carrier protein (203 aa).

The signal sequence occupies residues 1-21 (MKKWLAISCLIAGVTSTAVYA).

The protein belongs to the LolA family. As to quaternary structure, monomer.

It is found in the periplasm. In terms of biological role, participates in the translocation of lipoproteins from the inner membrane to the outer membrane. Only forms a complex with a lipoprotein if the residue after the N-terminal Cys is not an aspartate (The Asp acts as a targeting signal to indicate that the lipoprotein should stay in the inner membrane). The sequence is that of Outer-membrane lipoprotein carrier protein from Pectobacterium atrosepticum (strain SCRI 1043 / ATCC BAA-672) (Erwinia carotovora subsp. atroseptica).